The sequence spans 126 residues: Glycine cleavage system H protein (126 aa).

The region spanning 22–103 (KAYIGITDYA…PYGSWMALVE (82 aa)) is the Lipoyl-binding domain. N6-lipoyllysine is present on lysine 63.

This sequence belongs to the GcvH family. In terms of assembly, the glycine cleavage system is composed of four proteins: P, T, L and H. The cofactor is (R)-lipoate.

In terms of biological role, the glycine cleavage system catalyzes the degradation of glycine. The H protein shuttles the methylamine group of glycine from the P protein to the T protein. In Thermoanaerobacter pseudethanolicus (strain ATCC 33223 / 39E) (Clostridium thermohydrosulfuricum), this protein is Glycine cleavage system H protein.